A 273-amino-acid polypeptide reads, in one-letter code: MEADFQVCRNCKRNVASLHFMLHEAHCLRFIVLCPECEEPIPESKMKEHMEVVHQQTKESQQHPAKCKFCELAVQLSNLDVHESHCGSRTEHCPHCNQPITLQVLSQHKAMCLSAKGRPEEGKRIVSSPGRKTRCDLCKQMIPENTYASHMKQCSAPNTVTRIRDESIIVIPSTLAFMDSGNRRSTVSKDVRPKTKNRNSSTKRETKKQNGTVALPLKSGLQQRADLPTGDETAYDTLQNCCQCRILLPLPILNEHQEKCQRLAHQKKLQWGW.

Residues 22–80 form a TRAF-type zinc finger; it reads LHEAHCLRFIVLCPECEEPIPESKMKEHMEVVHQQTKESQQHPAKCKFCELAVQLSNLD. The tract at residues 181 to 228 is disordered; that stretch reads GNRRSTVSKDVRPKTKNRNSSTKRETKKQNGTVALPLKSGLQQRADLP.

In terms of assembly, interacts with BIRC1, BIRC2, BIRC3, BIRC4, BIRC7 and BIRC8. Part of an complex consisting of BIRC4, XAF1 and BIRC5; the complex formation requires IFN-beta stimulation. Interacts with RNF114, the interaction increases XAF1 stability and proapoptotic effects, and may regulate IFN signaling.

The protein localises to the cytoplasm. Its subcellular location is the nucleus. The protein resides in the mitochondrion. In terms of biological role, seems to function as a negative regulator of members of the IAP (inhibitor of apoptosis protein) family. Inhibits anti-caspase activity of BIRC4. Induces cleavage and inactivation of BIRC4 independent of caspase activation. Mediates TNF-alpha-induced apoptosis and is involved in apoptosis in trophoblast cells. May inhibit BIRC4 indirectly by activating the mitochondrial apoptosis pathway. After translocation to mitochondria, promotes translocation of BAX to mitochondria and cytochrome c release from mitochondria. Seems to promote the redistribution of BIRC4 from the cytoplasm to the nucleus, probably independent of BIRC4 inactivation which seems to occur in the cytoplasm. The BIRC4-XAF1 complex mediates down-regulation of BIRC5/survivin; the process requires the E3 ligase activity of BIRC4. Seems to be involved in cellular sensitivity to the proapoptotic actions of TRAIL. May be a tumor suppressor by mediating apoptosis resistance of cancer cells. The sequence is that of XIAP-associated factor 1 (Xaf1) from Mus musculus (Mouse).